Reading from the N-terminus, the 278-residue chain is HTH-type transcriptional activator RhaS (278 aa).

The region spanning 174-272 (NQLMAWLEDH…NWSPRDIRQG (99 aa)) is the HTH araC/xylS-type domain. DNA-binding regions (H-T-H motif) lie at residues 191 to 212 (EAVAEQFSLSLRTLHRQLKQHT) and 239 to 262 (VTEIAYRCGFGDSNHFSTLFRREF).

Binds DNA as a dimer.

It is found in the cytoplasm. Its function is as follows. Activates expression of the rhaBAD and rhaT operons. The sequence is that of HTH-type transcriptional activator RhaS from Salmonella agona (strain SL483).